The sequence spans 373 residues: Dual-specificity RNA methyltransferase RlmN (373 aa).

Glutamate 94 acts as the Proton acceptor in catalysis. The region spanning 100 to 339 (EDDRATLCVS…VIVRKTRGDD (240 aa)) is the Radical SAM core domain. Residues cysteine 107 and cysteine 344 are joined by a disulfide bond. Residues cysteine 114, cysteine 118, and cysteine 121 each coordinate [4Fe-4S] cluster. Residues 168–169 (GE), serine 200, 222–224 (SIH), and asparagine 301 contribute to the S-adenosyl-L-methionine site. The S-methylcysteine intermediate role is filled by cysteine 344.

This sequence belongs to the radical SAM superfamily. RlmN family. [4Fe-4S] cluster serves as cofactor.

The protein localises to the cytoplasm. It carries out the reaction adenosine(2503) in 23S rRNA + 2 reduced [2Fe-2S]-[ferredoxin] + 2 S-adenosyl-L-methionine = 2-methyladenosine(2503) in 23S rRNA + 5'-deoxyadenosine + L-methionine + 2 oxidized [2Fe-2S]-[ferredoxin] + S-adenosyl-L-homocysteine. It catalyses the reaction adenosine(37) in tRNA + 2 reduced [2Fe-2S]-[ferredoxin] + 2 S-adenosyl-L-methionine = 2-methyladenosine(37) in tRNA + 5'-deoxyadenosine + L-methionine + 2 oxidized [2Fe-2S]-[ferredoxin] + S-adenosyl-L-homocysteine. Functionally, specifically methylates position 2 of adenine 2503 in 23S rRNA and position 2 of adenine 37 in tRNAs. m2A2503 modification seems to play a crucial role in the proofreading step occurring at the peptidyl transferase center and thus would serve to optimize ribosomal fidelity. This Shewanella baltica (strain OS223) protein is Dual-specificity RNA methyltransferase RlmN.